Reading from the N-terminus, the 368-residue chain is Apolipoprotein A-V (368 aa).

An N-terminal signal peptide occupies residues 1-20 (MAAVITWALALLAVFASTQA). Residue S52 is modified to Phosphoserine. Residues 231-255 (TRKAKDLHTSIQRNLDQLRDELSAF) adopt a coiled-coil conformation. A disordered region spans residues 305-333 (EEIQHQLAPPPPSHSAFAPELGHSDSNKA).

It belongs to the apolipoprotein A1/A4/E family. In terms of assembly, interacts with GPIHBP1. Interacts with SORL1; this interaction leads to APOA5 internalization and sorting either to lysosomes and degradation, or to the trans-Golgi network. Post-translationally, phosphorylated by FAM20C in the extracellular medium. In terms of tissue distribution, liver.

The protein resides in the secreted. It localises to the early endosome. Its subcellular location is the late endosome. It is found in the golgi apparatus. The protein localises to the trans-Golgi network. In terms of biological role, minor apolipoprotein mainly associated with HDL and to a lesser extent with VLDL. May also be associated with chylomicrons. Important determinant of plasma triglyceride (TG) levels by both being a potent stimulator of apo-CII lipoprotein lipase (LPL) TG hydrolysis and an inhibitor of the hepatic VLDL-TG production rate (without affecting the VLDL-apoB production rate). Activates poorly lecithin:cholesterol acyltransferase (LCAT) and does not enhance efflux of cholesterol from macrophages. Binds heparin. This is Apolipoprotein A-V (Apoa5) from Mus musculus (Mouse).